Consider the following 474-residue polypeptide: tRNA-2-methylthio-N(6)-dimethylallyladenosine synthase (474 aa).

The 118-residue stretch at 3–120 (KKLLIKTWGC…LPEMIKQSQS (118 aa)) folds into the MTTase N-terminal domain. 6 residues coordinate [4Fe-4S] cluster: Cys-12, Cys-49, Cys-83, Cys-157, Cys-161, and Cys-164. In terms of domain architecture, Radical SAM core spans 143 to 375 (RAEGATAFVS…QQTVNTQAMR (233 aa)). Positions 378 to 441 (RQMLDTEQRV…ANSLRGELVR (64 aa)) constitute a TRAM domain.

Belongs to the methylthiotransferase family. MiaB subfamily. As to quaternary structure, monomer. [4Fe-4S] cluster serves as cofactor.

The protein resides in the cytoplasm. It catalyses the reaction N(6)-dimethylallyladenosine(37) in tRNA + (sulfur carrier)-SH + AH2 + 2 S-adenosyl-L-methionine = 2-methylsulfanyl-N(6)-dimethylallyladenosine(37) in tRNA + (sulfur carrier)-H + 5'-deoxyadenosine + L-methionine + A + S-adenosyl-L-homocysteine + 2 H(+). Functionally, catalyzes the methylthiolation of N6-(dimethylallyl)adenosine (i(6)A), leading to the formation of 2-methylthio-N6-(dimethylallyl)adenosine (ms(2)i(6)A) at position 37 in tRNAs that read codons beginning with uridine. The protein is tRNA-2-methylthio-N(6)-dimethylallyladenosine synthase of Vibrio campbellii (strain ATCC BAA-1116).